Consider the following 395-residue polypeptide: MLRRLLERPCTLALLVGSQLAVMMYLSLGGFRSLSALFGRDQGPTFDYSHPRDVYSNLSHLPGAPVAAGASPAEALPFCPERSPFLVGPVSVSFSPVPSLAEIVERNPRVEPGGRYRPAGCEARSRTAIIVPHRAREHHLRLLLYHLHPFLQRQQLAYGIYVIHQAGNGMFNRAKLLNVGVREALRDEEWDCLFLHDVDLLPENDHNLYVCDPRGPRHVAVAMNKFGYSLPYPQYFGGVSALTPDQYLKMNGFPNEYWGWGGEDDDIATRVRLAGMKISRPPTSVGHYKMVKHRGDKGNEENPHRFDLLVRTQNSWTQDGMNSLTYQLLAKELGPLYTNITADIGTDPRGPRAPSGPRYPPGSSQAFRQEMLQRRPPARPGPLPTANHTAPHGSH.

Topologically, residues 1–10 are cytoplasmic; sequence MLRRLLERPC. Residues 11-31 traverse the membrane as a helical; Signal-anchor for type II membrane protein segment; that stretch reads TLALLVGSQLAVMMYLSLGGF. Topologically, residues 32-395 are lumenal; it reads RSLSALFGRD…ANHTAPHGSH (364 aa). Asparagine 57 carries N-linked (GlcNAc...) asparagine glycosylation. Cysteine 79 and cysteine 121 are disulfide-bonded. UDP-alpha-D-galactose-binding positions include 132–136, 171–173, 198–199, tyrosine 228, and tryptophan 260; these read PHRAR, FNR, and VD. Residues cysteine 192 and cysteine 211 are joined by a disulfide bond. Residue aspartate 199 participates in Mn(2+) binding. N-acetyl-D-glucosamine is bound at residue 262–265; it reads GEDD. A Mn(2+)-binding site is contributed by histidine 293. 293 to 295 lines the UDP-alpha-D-galactose pocket; the sequence is HRG. Arginine 305 serves as a coordination point for N-acetyl-D-glucosamine. Asparagine 339 and asparagine 387 each carry an N-linked (GlcNAc...) asparagine glycan. The interval 341-395 is disordered; that stretch reads TADIGTDPRGPRAPSGPRYPPGSSQAFRQEMLQRRPPARPGPLPTANHTAPHGSH.

It belongs to the glycosyltransferase 7 family. It depends on Mn(2+) as a cofactor.

It localises to the golgi apparatus. The protein resides in the golgi stack membrane. It carries out the reaction an N-acetyl-beta-D-glucosaminyl derivative + UDP-alpha-D-galactose = a beta-D-galactosyl-(1-&gt;4)-N-acetyl-beta-D-glucosaminyl derivative + UDP + H(+). The catalysed reaction is N-acetyl-D-glucosamine + UDP-alpha-D-galactose = beta-D-galactosyl-(1-&gt;4)-N-acetyl-D-glucosamine + UDP + H(+). The enzyme catalyses a beta-D-GlcNAc-(1-&gt;3)-beta-D-Gal-(1-&gt;4)-beta-D-Glc-(1&lt;-&gt;1)-Cer(d18:1(4E)) + UDP-alpha-D-galactose = a neolactoside nLc4Cer(d18:1(4E)) + UDP + H(+). It catalyses the reaction a beta-D-glucosylceramide + UDP-alpha-D-galactose = a beta-D-galactosyl-(1-&gt;4)-beta-D-glucosyl-(1&lt;-&gt;1)-ceramide + UDP + H(+). It carries out the reaction a neolactoside IV(3)-beta-GlcNAc-nLc4Cer + UDP-alpha-D-galactose = a neolactoside nLc6Cer + UDP + H(+). It functions in the pathway protein modification; protein glycosylation. Functionally, responsible for the synthesis of complex-type N-linked oligosaccharides in many glycoproteins as well as the carbohydrate moieties of glycolipids. This is Beta-1,4-galactosyltransferase 3 (B4GALT3) from Cricetulus griseus (Chinese hamster).